The following is a 565-amino-acid chain: Wee1-like protein kinase 2 (565 aa).

Residues 217–493 form the Protein kinase domain; the sequence is FLELERIGVG…TKHPILRPSL (277 aa). Residues 223 to 231 and Lys246 each bind ATP; that span reads IGVGEFGSV. Asp344 serves as the catalytic Proton acceptor. Positions 349 and 383 each coordinate Mg(2+). A coiled-coil region spans residues 496 to 522; sequence AVQLQKQLNVEKCKTAMLERELKAARL. The tract at residues 531-553 is disordered; the sequence is PLGNANLQESETSPKKNNKRLVG.

The protein belongs to the protein kinase superfamily. Ser/Thr protein kinase family. WEE1 subfamily.

Its subcellular location is the nucleus. The catalysed reaction is L-tyrosyl-[protein] + ATP = O-phospho-L-tyrosyl-[protein] + ADP + H(+). Its function is as follows. Oocyte-specific protein tyrosine kinase that phosphorylates and inhibits CDK1 and acts as a key regulator of meiosis. Required to maintain meiotic arrest in oocytes by phosphorylating CDK1 at 'Tyr-15', leading to inhibit CDK1 activity and prevent meiotic reentry. The sequence is that of Wee1-like protein kinase 2 (WEE2) from Gallus gallus (Chicken).